The primary structure comprises 146 residues: D-aminoacyl-tRNA deacylase (146 aa).

The Gly-cisPro motif, important for rejection of L-amino acids motif lies at 138–139 (GP).

The protein belongs to the DTD family. As to quaternary structure, homodimer.

It is found in the cytoplasm. The enzyme catalyses glycyl-tRNA(Ala) + H2O = tRNA(Ala) + glycine + H(+). It carries out the reaction a D-aminoacyl-tRNA + H2O = a tRNA + a D-alpha-amino acid + H(+). In terms of biological role, an aminoacyl-tRNA editing enzyme that deacylates mischarged D-aminoacyl-tRNAs. Also deacylates mischarged glycyl-tRNA(Ala), protecting cells against glycine mischarging by AlaRS. Acts via tRNA-based rather than protein-based catalysis; rejects L-amino acids rather than detecting D-amino acids in the active site. By recycling D-aminoacyl-tRNA to D-amino acids and free tRNA molecules, this enzyme counteracts the toxicity associated with the formation of D-aminoacyl-tRNA entities in vivo and helps enforce protein L-homochirality. The chain is D-aminoacyl-tRNA deacylase from Xanthomonas oryzae pv. oryzae (strain MAFF 311018).